The chain runs to 97 residues: Eclosion hormone (97 aa).

Positions 1-17 (MNCKPLILCTFVAVAMC) are cleaved as a signal peptide. 3 cysteine pairs are disulfide-bonded: Cys-48-Cys-72, Cys-52-Cys-68, and Cys-55-Cys-83.

This sequence belongs to the insect eclosion hormone family. As to expression, expressed in a single pair of brain neurons which extend their processes the entire length of the central nervous system and also to the corpora cardiaca portion of the ring gland. These cells show massive depletion of immunoreactive Eh at ecdysis.

It localises to the secreted. Its function is as follows. Neuropeptide that triggers the performance of ecdysis behaviors at the end of a molt. It triggers adult behavior patterns: larval, pupal and adult ecdysis, and plasticization during the molt. The sequence is that of Eclosion hormone (Eh) from Drosophila melanogaster (Fruit fly).